A 41-amino-acid polypeptide reads, in one-letter code: Photosystem I reaction center subunit IX (41 aa).

The helical transmembrane segment at 7–27 (YLSTAPVVAAAWFTFTAGLLI) threads the bilayer.

It belongs to the PsaJ family.

Its subcellular location is the plastid. The protein localises to the chloroplast thylakoid membrane. In terms of biological role, may help in the organization of the PsaE and PsaF subunits. This is Photosystem I reaction center subunit IX from Oltmannsiellopsis viridis (Marine flagellate).